The sequence spans 74 residues: UPF0352 protein PM1884 (74 aa).

This sequence belongs to the UPF0352 family.

The polypeptide is UPF0352 protein PM1884 (Pasteurella multocida (strain Pm70)).